Here is a 444-residue protein sequence, read N- to C-terminus: Protein Z-dependent protease inhibitor (444 aa).

The signal sequence occupies residues 1-21 (MKVVPSLLLSVLLAQVWLVPG). Residues 24 to 65 (PSPQSPETPAPQNQTSRVVQAPKEEEEDEQEASEEKASEEEK) form a disordered region. An N-linked (GlcNAc...) asparagine glycan is attached at Asn-36. Ser-56 is modified (phosphoserine; by FAM20C). Residues 56 to 65 (SEEKASEEEK) show a composition bias toward basic and acidic residues. Positions 136–153 (TKPGLLPSLFKGLRETLS) are heparin-binding. 3 N-linked (GlcNAc...) asparagine glycosylation sites follow: Asn-180, Asn-197, and Asn-295.

This sequence belongs to the serpin family. Interacts with PROZ. Phosphorylated by FAM20C in the extracellular medium. Expressed by the liver and secreted in plasma.

Its subcellular location is the secreted. Functionally, inhibits activity of the coagulation protease factor Xa in the presence of PROZ, calcium and phospholipids. Also inhibits factor XIa in the absence of cofactors. This chain is Protein Z-dependent protease inhibitor (SERPINA10), found in Homo sapiens (Human).